The sequence spans 504 residues: ATP synthase subunit alpha (504 aa).

170–177 (GDRQTGKT) lines the ATP pocket.

This sequence belongs to the ATPase alpha/beta chains family. As to quaternary structure, F-type ATPases have 2 components, CF(1) - the catalytic core - and CF(0) - the membrane proton channel. CF(1) has five subunits: alpha(3), beta(3), gamma(1), delta(1), epsilon(1). CF(0) has four main subunits: a, b, b' and c.

Its subcellular location is the cellular thylakoid membrane. The catalysed reaction is ATP + H2O + 4 H(+)(in) = ADP + phosphate + 5 H(+)(out). In terms of biological role, produces ATP from ADP in the presence of a proton gradient across the membrane. The alpha chain is a regulatory subunit. The protein is ATP synthase subunit alpha of Prochlorococcus marinus (strain MIT 9211).